The chain runs to 378 residues: Ribosomal RNA large subunit methyltransferase G (378 aa).

It belongs to the methyltransferase superfamily. RlmG family.

It localises to the cytoplasm. The catalysed reaction is guanosine(1835) in 23S rRNA + S-adenosyl-L-methionine = N(2)-methylguanosine(1835) in 23S rRNA + S-adenosyl-L-homocysteine + H(+). Functionally, specifically methylates the guanine in position 1835 (m2G1835) of 23S rRNA. The polypeptide is Ribosomal RNA large subunit methyltransferase G (Escherichia coli O6:K15:H31 (strain 536 / UPEC)).